A 370-amino-acid polypeptide reads, in one-letter code: tRNA-specific 2-thiouridylase MnmA (370 aa).

ATP contacts are provided by residues 9 to 16 (GMSGGVDS) and Met-35. The interval 95–97 (NPD) is interaction with target base in tRNA. Cys-100 serves as the catalytic Nucleophile. An intrachain disulfide couples Cys-100 to Cys-196. Gly-124 is an ATP binding site. Residues 146–148 (KDQ) form an interaction with tRNA region. Residue Cys-196 is the Cysteine persulfide intermediate of the active site. Residues 308–309 (RY) are interaction with tRNA.

It belongs to the MnmA/TRMU family.

Its subcellular location is the cytoplasm. The enzyme catalyses S-sulfanyl-L-cysteinyl-[protein] + uridine(34) in tRNA + AH2 + ATP = 2-thiouridine(34) in tRNA + L-cysteinyl-[protein] + A + AMP + diphosphate + H(+). Catalyzes the 2-thiolation of uridine at the wobble position (U34) of tRNA, leading to the formation of s(2)U34. In Ralstonia nicotianae (strain ATCC BAA-1114 / GMI1000) (Ralstonia solanacearum), this protein is tRNA-specific 2-thiouridylase MnmA.